Consider the following 410-residue polypeptide: Digeranylgeranylglycerophospholipid reductase (410 aa).

6 residues coordinate FAD: alanine 15, glutamate 34, valine 118, aspartate 286, glycine 298, and isoleucine 299. 2 residues coordinate a 2,3-bis-O-(geranylgeranyl)-sn-glycerol 1-phospholipid: lysine 343 and alanine 379.

This sequence belongs to the geranylgeranyl reductase family. DGGGPL reductase subfamily. FAD is required as a cofactor.

It catalyses the reaction a 2,3-bis-O-phytanyl-sn-glycerol 1-phospholipid + 8 A = a 2,3-bis-O-(geranylgeranyl)-sn-glycerol 1-phospholipid + 8 AH2. The catalysed reaction is 2,3-bis-O-(phytanyl)-sn-glycerol 1-phosphate + 8 A = 2,3-bis-O-(geranylgeranyl)-sn-glycerol 1-phosphate + 8 AH2. It carries out the reaction CDP-2,3-bis-O-(geranylgeranyl)-sn-glycerol + 8 AH2 = CDP-2,3-bis-O-(phytanyl)-sn-glycerol + 8 A. The enzyme catalyses archaetidylserine + 8 AH2 = 2,3-bis-O-phytanyl-sn-glycero-3-phospho-L-serine + 8 A. Its pathway is membrane lipid metabolism; glycerophospholipid metabolism. Its function is as follows. Is involved in the reduction of 2,3-digeranylgeranylglycerophospholipids (unsaturated archaeols) into 2,3-diphytanylglycerophospholipids (saturated archaeols) in the biosynthesis of archaeal membrane lipids. Can fully reduce the unsaturated isoprenoid side chains of membrane phospholipids and glycolipids. Is also able to reduce the omega-position isoprene of dolichol phosphate. In Haloferax volcanii (strain ATCC 29605 / DSM 3757 / JCM 8879 / NBRC 14742 / NCIMB 2012 / VKM B-1768 / DS2) (Halobacterium volcanii), this protein is Digeranylgeranylglycerophospholipid reductase.